The chain runs to 293 residues: DOMON domain-containing protein FRRS1L (293 aa).

The signal sequence occupies residues methionine 1–alanine 28. Residues serine 29–aspartate 60 are disordered. Positions alanine 46–aspartate 60 are enriched in basic and acidic residues. A DOMON domain is found at cysteine 119–alanine 234. A helical membrane pass occupies residues threonine 271–glycine 291.

Component of the outer core of AMPAR complex. AMPAR complex consists of an inner core made of 4 pore-forming GluA/GRIA proteins (GRIA1, GRIA2, GRIA3 and GRIA4) and 4 major auxiliary subunits arranged in a twofold symmetry. One of the two pairs of distinct binding sites is occupied either by CNIH2, CNIH3 or CACNG2, CACNG3. The other harbors CACNG2, CACNG3, CACNG4, CACNG8 or GSG1L. This inner core of AMPAR complex is complemented by outer core constituents binding directly to the GluA/GRIA proteins at sites distinct from the interaction sites of the inner core constituents. Outer core constituents include at least PRRT1, PRRT2, CKAMP44/SHISA9, FRRS1L and NRN1. The proteins of the inner and outer core serve as a platform for other, more peripherally associated AMPAR constituents. Alone or in combination, these auxiliary subunits control the gating and pharmacology of the AMPAR complex and profoundly impact their biogenesis and protein processing. As to expression, expressed in the brain (at protein level). In embryos expression is evident in the ventral forebrain, but a lower level is seen in the remainder of the embryos. In the adult brain, expressed in the cortex, cerebellum, hippocampus and basal ganglia.

The protein localises to the cell membrane. The protein resides in the synapse. In terms of biological role, important modulator of glutamate signaling pathway. This Mus musculus (Mouse) protein is DOMON domain-containing protein FRRS1L (Frrs1l).